Here is a 106-residue protein sequence, read N- to C-terminus: Iron-sulfur cluster assembly protein CyaY (106 aa).

It belongs to the frataxin family.

In terms of biological role, involved in iron-sulfur (Fe-S) cluster assembly. May act as a regulator of Fe-S biogenesis. This chain is Iron-sulfur cluster assembly protein CyaY, found in Pectobacterium atrosepticum (strain SCRI 1043 / ATCC BAA-672) (Erwinia carotovora subsp. atroseptica).